A 727-amino-acid polypeptide reads, in one-letter code: MNHSPLKTALAYECFQDQDNSTLALPSDQKMKTGTSGRQRVQEQVMMTVKRQKSKSSQSSTLSHSNRGSMYDGLADSYNNYGTSSRSSFYSKFQAGSGSWGYPIYNGTLKREADNRRFSSYSQMESWGRQYPRGGCTAAGAGSDICFMQKIKASRSEPDLYCDPRGTLRKGTLGGKGHKTTQNRYSFYSTCSGQKAVKKYPGRPPSCTSRQDPVCVPPTSCTKDLSFSHSRASSKICSEDIECSGLTIPKAVQYLSSQDEKCQAIGAYYIQHTCFQDESAKQQVYQLGGICKLVDLLRSPNQNVQQAAAGALRNLVFRSTTNKLETRRQNGIREAVSLLRRTGSTEIQKQLTGLLWNLSSTDELKEELIAEALPVLADRVIIPFSGWCDGNSNLSREPVDPEVFFNATGCLRNLSSADVGRQTMRNYTGLIDSLMAYVQNCVAANRCDDKSVENCMCVLHNLSYRLDAEVPTRYRQLEYNARNAYTDKSSTGCFSNKSDRMTNNNYDCPLPEEEPNPKGSSWLYHSDAVRTYLNLMGKSKKDATLEACAGALQNLTASKGLMSSGMSQLIGLKEKGLPHIARLLQSGNSDVVRSGASLLSNMSRHPALHRVMGTQVFPEVTRLLTSHTGNTSNSEDILASACYTVRNLMASLPGMAKQHFSSSMVNNIINLCRSSTSPKAAEAARLLLSDMWSSRELQGLLRQQGFDRSMLGTLAGANSLRNFTSRF.

A required for binding to single stranded DNA region spans residues 1 to 235 (MNHSPLKTAL…SFSHSRASSK (235 aa)). The required for interaction with EIF4A1 stretch occupies residues 1 to 287 (MNHSPLKTAL…ESAKQQVYQL (287 aa)). S4 carries the phosphoserine modification. The tract at residues 48 to 69 (TVKRQKSKSSQSSTLSHSNRGS) is disordered. 2 phosphorylation in this region is required for cytoplasmic localization and protein stabilization regions span residues 54–69 (SKSSQSSTLSHSNRGS) and 117–192 (RFSS…STCS). A phosphoserine mark is found at S119, S120, S122, and S143. Residues 161–270 (YCDPRGTLRK…KCQAIGAYYI (110 aa)) form a required for WNT-mediated nuclear localization region. ARM repeat units follow at residues 244–275 (SGLTIPKAVQYLSSQDEKCQAIGAYYIQHTCF), 276–317 (QDES…NLVF), 318–360 (RSTT…NLSS), 361–412 (TDEL…GCLR), 413–443 (NLSSADVGRQTMRNYTGLIDSLMAYVQNCVA), 505–536 (NYDCPLPEEEPNPKGSSWLYHSDAVRTYLNLM), 537–583 (GKSK…IARL), 584–629 (LQSG…SHTG), and 630–693 (NTSN…DMWS).

Belongs to the beta-catenin family. As to quaternary structure, part of a complex that contains DSG3, PKP1, YAP1 and YWHAG; the complex is required for localization of DSG3 and YAP1 to the cell membrane in keratinocytes. Interacts (via N-terminus) with KRT5/CK5, KRT8/CK8 (via rod domain), KRT15/CK15 and KRT18/CK18 (via rod domain) as part of intermediate filaments. Interacts with VIM (via rod domain). Interacts with DSP. Interacts with DES. Interacts with FXR1; the interaction may facilitate the binding of PKP1 to PKP2, PKP3 and DSP mRNA. Interacts (via N-terminus) with EIF4A1; the interaction promotes EIF4A1 recruitment to the cap-dependent translation complex and EIF4A1 ATPase activity. Interacts with TJP1/ZO-1; the interaction facilitates TJP1/ZO-1 localization to the plasma membrane. Interacts (when phosphorylated) with YWHAG; the interaction results in translocation of PKP1 to the cytoplasm and loss of intercellular adhesion in keratinocytes. In terms of processing, phosphorylated by AKT2; required for interaction with YWHAG and subsequent localization away from desmosomes to the cytoplasm. Phosphorylation of Ser-119 by AKT2 promotes PKP1-driven cap-dependent mRNA translation and decreases intercellular adhesion, phosphorylation is promoted by insulin. Phosphorylation by RIPK4 at the N-terminus is required for its role in differentiation of keratinocytes and DSG1 localization at cell junctions.

Its subcellular location is the nucleus. The protein localises to the cytoplasm. It is found in the perinuclear region. It localises to the cell junction. The protein resides in the desmosome. Its subcellular location is the cell membrane. The protein localises to the stress granule. A component of desmosome cell-cell junctions which are required for positive regulation of cellular adhesion. Plays a role in desmosome protein expression regulation and localization to the desmosomal plaque, thereby maintaining cell sheet integrity and anchorage of desmosomes to intermediate filaments. Required for localization of DSG3 and YAP1 to the cell membrane in keratinocytes in response to mechanical strain, via the formation of an interaction complex composed of DSG3, YAP1, PKP1 and YWHAG. Positively regulates differentiation of keratinocytes, potentially via promoting localization of DSG1 at desmosome cell junctions. Required for calcium-independent development and maturation of desmosome plaques specifically at lateral cell-cell contacts in differentiating keratinocytes. Plays a role in the maintenance of DSG3 protein abundance, DSG3 clustering and localization of these clusters to the cell membrane in keratinocytes. May also promote keratinocyte proliferation and morphogenesis during postnatal development. Required for tight junction inside-out transepidermal barrier function of the skin. Promotes Wnt-mediated proliferation and differentiation of ameloblasts, via facilitating TJP1/ZO-1 localization to tight junctions. Binds single-stranded DNA (ssDNA), and may thereby play a role in sensing DNA damage and promoting cell survival. Positively regulates cap-dependent translation and as a result cell proliferation, via recruitment of EIF4A1 to the initiation complex and promotion of EIF4A1 ATPase activity. Regulates the mRNA stability and protein abundance of desmosome components PKP2, PKP3, DSC2 and DSP, potentially via its interaction with FXR1. May facilitate the formation of intermediate filaments. In Bos taurus (Bovine), this protein is Plakophilin-1 (PKP1).